We begin with the raw amino-acid sequence, 195 residues long: Large ribosomal subunit protein uL18 (195 aa).

The protein belongs to the universal ribosomal protein uL18 family. In terms of assembly, part of the 50S ribosomal subunit. Contacts the 5S and 23S rRNAs.

Its function is as follows. This is one of the proteins that bind and probably mediate the attachment of the 5S RNA into the large ribosomal subunit, where it forms part of the central protuberance. The protein is Large ribosomal subunit protein uL18 of Korarchaeum cryptofilum (strain OPF8).